The chain runs to 95 residues: Aspartyl/glutamyl-tRNA(Asn/Gln) amidotransferase subunit C (95 aa).

It belongs to the GatC family. In terms of assembly, heterotrimer of A, B and C subunits.

It carries out the reaction L-glutamyl-tRNA(Gln) + L-glutamine + ATP + H2O = L-glutaminyl-tRNA(Gln) + L-glutamate + ADP + phosphate + H(+). The enzyme catalyses L-aspartyl-tRNA(Asn) + L-glutamine + ATP + H2O = L-asparaginyl-tRNA(Asn) + L-glutamate + ADP + phosphate + 2 H(+). In terms of biological role, allows the formation of correctly charged Asn-tRNA(Asn) or Gln-tRNA(Gln) through the transamidation of misacylated Asp-tRNA(Asn) or Glu-tRNA(Gln) in organisms which lack either or both of asparaginyl-tRNA or glutaminyl-tRNA synthetases. The reaction takes place in the presence of glutamine and ATP through an activated phospho-Asp-tRNA(Asn) or phospho-Glu-tRNA(Gln). The sequence is that of Aspartyl/glutamyl-tRNA(Asn/Gln) amidotransferase subunit C from Geobacter sulfurreducens (strain ATCC 51573 / DSM 12127 / PCA).